A 237-amino-acid polypeptide reads, in one-letter code: Sugar fermentation stimulation protein homolog (237 aa).

The protein belongs to the SfsA family.

This chain is Sugar fermentation stimulation protein homolog, found in Actinobacillus pleuropneumoniae serotype 3 (strain JL03).